Consider the following 98-residue polypeptide: MVSYLCMSVSSGWLSIGKIAIKDGKCDPKNGNLYAIGEKWYNDEDCFEITCIQGDKGSVAQQVASCPVHAVKPGCELVFPGGTYPKCCPYYECPKLVI.

Positions 1-24 are cleaved as a signal peptide; sequence MVSYLCMSVSSGWLSIGKIAIKDG.

Belongs to the scoloptoxin-16 family. In terms of processing, contains 4 disulfide bonds. Expressed by the venom gland.

Its subcellular location is the secreted. This chain is U-scoloptoxin(16)-Er9a, found in Ethmostigmus rubripes (Giant centipede).